We begin with the raw amino-acid sequence, 208 residues long: Pyridoxal 5'-phosphate synthase subunit PdxT (208 aa).

An L-glutamine-binding site is contributed by 46-48 (GES). Catalysis depends on Cys78, which acts as the Nucleophile. L-glutamine contacts are provided by residues Arg105 and 156 to 157 (IR). Catalysis depends on charge relay system residues His192 and Glu194.

Belongs to the glutaminase PdxT/SNO family. As to quaternary structure, in the presence of PdxS, forms a dodecamer of heterodimers. Only shows activity in the heterodimer.

It catalyses the reaction aldehydo-D-ribose 5-phosphate + D-glyceraldehyde 3-phosphate + L-glutamine = pyridoxal 5'-phosphate + L-glutamate + phosphate + 3 H2O + H(+). The enzyme catalyses L-glutamine + H2O = L-glutamate + NH4(+). It participates in cofactor biosynthesis; pyridoxal 5'-phosphate biosynthesis. Its function is as follows. Catalyzes the hydrolysis of glutamine to glutamate and ammonia as part of the biosynthesis of pyridoxal 5'-phosphate. The resulting ammonia molecule is channeled to the active site of PdxS. The sequence is that of Pyridoxal 5'-phosphate synthase subunit PdxT from Bifidobacterium adolescentis (strain ATCC 15703 / DSM 20083 / NCTC 11814 / E194a).